The sequence spans 803 residues: Ras GTPase-activating protein 4B (803 aa).

2 C2 domains span residues 1–105 (MAKR…SGWA) and 116–232 (VQGE…EGWF). Ca(2+)-binding residues include D21, D27, D74, D76, S79, D82, D149, D155, D202, D204, S207, and D210. Residues 318-546 (GLAKDFLDLL…AQLKDFITKL (229 aa)) form the Ras-GAP domain. A PH domain is found at 566 to 673 (PPVKEGPLFI…WLSALRKVSI (108 aa)). The Btk-type zinc finger occupies 675 to 711 (NTGLLGSYHPGVFRGDKWSCCHQKEKTGQGCDKTRSR). Positions 683, 694, 695, and 705 each coordinate Zn(2+). The segment at 781 to 803 (EAHSSSPAGSPPSEPNCLLELQT) is disordered.

The cofactor is Ca(2+).

It localises to the cytoplasm. The protein resides in the cytosol. Its subcellular location is the cell membrane. Ca(2+)-dependent Ras GTPase-activating protein, that may play a role in the Ras-MAPK pathway. In Homo sapiens (Human), this protein is Ras GTPase-activating protein 4B (RASA4B).